We begin with the raw amino-acid sequence, 513 residues long: ATP synthase subunit alpha (513 aa).

169-176 lines the ATP pocket; it reads GDRQTGKT.

The protein belongs to the ATPase alpha/beta chains family. As to quaternary structure, F-type ATPases have 2 components, CF(1) - the catalytic core - and CF(0) - the membrane proton channel. CF(1) has five subunits: alpha(3), beta(3), gamma(1), delta(1), epsilon(1). CF(0) has three main subunits: a(1), b(2) and c(9-12). The alpha and beta chains form an alternating ring which encloses part of the gamma chain. CF(1) is attached to CF(0) by a central stalk formed by the gamma and epsilon chains, while a peripheral stalk is formed by the delta and b chains.

The protein resides in the cell inner membrane. The enzyme catalyses ATP + H2O + 4 H(+)(in) = ADP + phosphate + 5 H(+)(out). Functionally, produces ATP from ADP in the presence of a proton gradient across the membrane. The alpha chain is a regulatory subunit. The polypeptide is ATP synthase subunit alpha (Shewanella sp. (strain MR-4)).